A 60-amino-acid chain; its full sequence is Large ribosomal subunit protein bL32 (60 aa).

Residues 1-21 are disordered; sequence MAVPRNRHSNARKNIRRSHDA.

It belongs to the bacterial ribosomal protein bL32 family.

In Chlamydia felis (strain Fe/C-56) (Chlamydophila felis), this protein is Large ribosomal subunit protein bL32.